The chain runs to 408 residues: Peptidase T (408 aa).

H78 contacts Zn(2+). Residue D80 is part of the active site. D141 is a binding site for Zn(2+). E175 acts as the Proton acceptor in catalysis. Zn(2+)-binding residues include E176, D198, and H380.

It belongs to the peptidase M20B family. Requires Zn(2+) as cofactor.

It localises to the cytoplasm. The enzyme catalyses Release of the N-terminal residue from a tripeptide.. Cleaves the N-terminal amino acid of tripeptides. In Clostridium botulinum (strain 657 / Type Ba4), this protein is Peptidase T.